A 352-amino-acid polypeptide reads, in one-letter code: Holliday junction branch migration complex subunit RuvB (352 aa).

The tract at residues 1-182 is large ATPase domain (RuvB-L); it reads MRIELLNTPP…FGINSRFDYY (182 aa). Residues Ile21, Arg22, Gly63, Lys66, Thr67, Thr68, 129–131, Arg172, Tyr182, and Arg219 each bind ATP; that span reads EDF. A Mg(2+)-binding site is contributed by Thr67. Residues 183–253 form a small ATPAse domain (RuvB-S) region; that stretch reads EPELLTRIII…IAMKTLECLE (71 aa). The interval 256 to 352 is head domain (RuvB-H); sequence EEGLDEMDKK…LPLFDESEAD (97 aa). DNA is bound by residues Arg292, Arg311, and Arg316.

It belongs to the RuvB family. As to quaternary structure, homohexamer. Forms an RuvA(8)-RuvB(12)-Holliday junction (HJ) complex. HJ DNA is sandwiched between 2 RuvA tetramers; dsDNA enters through RuvA and exits via RuvB. An RuvB hexamer assembles on each DNA strand where it exits the tetramer. Each RuvB hexamer is contacted by two RuvA subunits (via domain III) on 2 adjacent RuvB subunits; this complex drives branch migration. In the full resolvosome a probable DNA-RuvA(4)-RuvB(12)-RuvC(2) complex forms which resolves the HJ.

The protein localises to the cytoplasm. The enzyme catalyses ATP + H2O = ADP + phosphate + H(+). In terms of biological role, the RuvA-RuvB-RuvC complex processes Holliday junction (HJ) DNA during genetic recombination and DNA repair, while the RuvA-RuvB complex plays an important role in the rescue of blocked DNA replication forks via replication fork reversal (RFR). RuvA specifically binds to HJ cruciform DNA, conferring on it an open structure. The RuvB hexamer acts as an ATP-dependent pump, pulling dsDNA into and through the RuvAB complex. RuvB forms 2 homohexamers on either side of HJ DNA bound by 1 or 2 RuvA tetramers; 4 subunits per hexamer contact DNA at a time. Coordinated motions by a converter formed by DNA-disengaged RuvB subunits stimulates ATP hydrolysis and nucleotide exchange. Immobilization of the converter enables RuvB to convert the ATP-contained energy into a lever motion, pulling 2 nucleotides of DNA out of the RuvA tetramer per ATP hydrolyzed, thus driving DNA branch migration. The RuvB motors rotate together with the DNA substrate, which together with the progressing nucleotide cycle form the mechanistic basis for DNA recombination by continuous HJ branch migration. Branch migration allows RuvC to scan DNA until it finds its consensus sequence, where it cleaves and resolves cruciform DNA. This chain is Holliday junction branch migration complex subunit RuvB, found in Chlorobium chlorochromatii (strain CaD3).